The primary structure comprises 90 residues: Exodeoxyribonuclease 7 small subunit (90 aa).

The segment at 62 to 90 (QDGQANPMSSQGHTAGEYPDDEAEEAEEA) is disordered. Polar residues predominate over residues 64–74 (GQANPMSSQGH). A compositionally biased stretch (acidic residues) spans 79–90 (YPDDEAEEAEEA).

The protein belongs to the XseB family. In terms of assembly, heterooligomer composed of large and small subunits.

It is found in the cytoplasm. It catalyses the reaction Exonucleolytic cleavage in either 5'- to 3'- or 3'- to 5'-direction to yield nucleoside 5'-phosphates.. Functionally, bidirectionally degrades single-stranded DNA into large acid-insoluble oligonucleotides, which are then degraded further into small acid-soluble oligonucleotides. The sequence is that of Exodeoxyribonuclease 7 small subunit from Desulfovibrio desulfuricans (strain ATCC 27774 / DSM 6949 / MB).